The chain runs to 278 residues: Elongation factor Ts (278 aa).

Residues 79 to 82 (TDFV) are involved in Mg(2+) ion dislocation from EF-Tu.

It belongs to the EF-Ts family.

Its subcellular location is the cytoplasm. Functionally, associates with the EF-Tu.GDP complex and induces the exchange of GDP to GTP. It remains bound to the aminoacyl-tRNA.EF-Tu.GTP complex up to the GTP hydrolysis stage on the ribosome. The polypeptide is Elongation factor Ts (Borrelia hermsii (strain HS1 / DAH)).